The sequence spans 140 residues: Sex-regulated protein janus-B (140 aa).

Arg-42 contacts substrate. Catalysis depends on His-69, which acts as the Proton acceptor. 110–112 (SRT) is a binding site for substrate.

Belongs to the janus family.

JanA and janB regulate somatic sex differentiation. The polypeptide is Sex-regulated protein janus-B (janB) (Drosophila simulans (Fruit fly)).